We begin with the raw amino-acid sequence, 3088 residues long: Protein prune homolog 2 (3088 aa).

Met-1 is subject to N-acetylmethionine. Positions Gly-109–Ser-111 match the DHH motif motif. Disordered regions lie at residues Ile-433–Ser-468, His-490–Ser-628, Ser-673–Asn-759, Ser-771–Ala-795, Ser-846–Arg-909, Ser-952–Asp-1080, Ser-1192–Ser-1211, Ser-1231–Ser-1371, Arg-1413–Phe-1452, Leu-1472–Phe-1491, Val-1515–Glu-1585, Asp-1632–Ile-1698, Leu-1741–Thr-1768, Val-1782–Asp-1813, Ile-2089–Lys-2114, Tyr-2173–Ala-2215, Gln-2240–Gln-2260, Ser-2492–Asp-2542, Thr-2589–Gly-2667, Ala-2687–Asp-2710, Gln-2814–Ile-2833, and Pro-2841–Glu-2875. Low complexity predominate over residues Ser-503–Ser-512. Residues Ser-562–Glu-582 show a composition bias toward basic and acidic residues. 2 stretches are compositionally biased toward polar residues: residues Met-613–Glu-625 and Ser-673–Glu-684. Residues Ser-685–Ser-699 show a composition bias toward basic and acidic residues. Polar residues predominate over residues Leu-750 to Asn-759. Polar residues predominate over residues Ser-846–Asn-857. A compositionally biased stretch (basic and acidic residues) spans Trp-865 to Ile-876. The segment covering Asn-881 to Lys-894 has biased composition (polar residues). Residues Pro-895 to Arg-909 are compositionally biased toward basic and acidic residues. A compositionally biased stretch (low complexity) spans Asp-964–Thr-977. Residues Gly-980–Asp-1000 are compositionally biased toward basic and acidic residues. 2 stretches are compositionally biased toward polar residues: residues Gly-1001–Pro-1027 and His-1037–His-1048. Basic and acidic residues-rich tracts occupy residues Asn-1049–Gly-1062, Ser-1192–Asn-1208, His-1282–Leu-1293, Asp-1314–Leu-1339, and Gln-1425–Leu-1434. The segment covering Ser-1436–Met-1450 has biased composition (polar residues). Positions Ser-1537–Glu-1585 are enriched in polar residues. Residues Ser-1687–Ile-1698 show a composition bias toward acidic residues. A compositionally biased stretch (polar residues) spans Lys-1752–Thr-1768. 2 stretches are compositionally biased toward basic and acidic residues: residues Glu-2516 to Asp-2542 and Asn-2604 to Ser-2622. Residues Ser-2623–Ser-2632 are compositionally biased toward polar residues. A compositionally biased stretch (acidic residues) spans Asp-2823–Ile-2833. Residues Asp-2895–Arg-3056 enclose the CRAL-TRIO domain.

The protein belongs to the PPase class C family. Prune subfamily. In terms of tissue distribution, a high level of expression seen in the nervous system (brain, cerebellum and spinal cord) as well as adrenal gland. Expressed at high levels in noneuroblastoma, rhabdomyosarcoma, melanoma and some osteosarcoma cell lines, whereas at only low levels in cancer cell lines of liver, breast, thyroid and colon. Expression is significantly higher in favorable tumors than aggressive ones.

It is found in the cytoplasm. May play an important role in regulating differentiation, survival and aggressiveness of the tumor cells. The chain is Protein prune homolog 2 (PRUNE2) from Homo sapiens (Human).